We begin with the raw amino-acid sequence, 91 residues long: Large ribosomal subunit protein uL23 (91 aa).

The protein belongs to the universal ribosomal protein uL23 family. As to quaternary structure, part of the 50S ribosomal subunit. Contacts protein L29.

In terms of biological role, binds to 23S rRNA. One of the proteins that surrounds the polypeptide exit tunnel on the outside of the ribosome. In Staphylothermus marinus (strain ATCC 43588 / DSM 3639 / JCM 9404 / F1), this protein is Large ribosomal subunit protein uL23.